A 63-amino-acid chain; its full sequence is MKAQELREKSVEELNTELLNLLREQFNLRMQAASGQLQQTHLLKQVRRNVARVKTLLTEKAGV.

It belongs to the universal ribosomal protein uL29 family.

This Serratia proteamaculans (strain 568) protein is Large ribosomal subunit protein uL29.